Consider the following 386-residue polypeptide: Eukaryotic translation initiation factor 3 subunit M (386 aa).

The PCI domain maps to asparagine 181 to histidine 343.

This sequence belongs to the eIF-3 subunit M family. As to quaternary structure, component of the eukaryotic translation initiation factor 3 (eIF-3) complex.

The protein resides in the cytoplasm. Functionally, component of the eukaryotic translation initiation factor 3 (eIF-3) complex, which is involved in protein synthesis of a specialized repertoire of mRNAs and, together with other initiation factors, stimulates binding of mRNA and methionyl-tRNAi to the 40S ribosome. The eIF-3 complex specifically targets and initiates translation of a subset of mRNAs involved in cell proliferation. In Culex quinquefasciatus (Southern house mosquito), this protein is Eukaryotic translation initiation factor 3 subunit M.